Here is a 273-residue protein sequence, read N- to C-terminus: 4-hydroxy-tetrahydrodipicolinate reductase (273 aa).

Residues 12-17 and glutamate 38 each bind NAD(+); that span reads GAGGRM. Arginine 39 contacts NADP(+). NAD(+) is bound by residues 102–104 and 126–129; these read GTT and AANF. Histidine 159 acts as the Proton donor/acceptor in catalysis. Residue histidine 160 coordinates (S)-2,3,4,5-tetrahydrodipicolinate. The active-site Proton donor is lysine 163. 169–170 provides a ligand contact to (S)-2,3,4,5-tetrahydrodipicolinate; the sequence is GT.

This sequence belongs to the DapB family. In terms of assembly, homotetramer.

It is found in the cytoplasm. It carries out the reaction (S)-2,3,4,5-tetrahydrodipicolinate + NAD(+) + H2O = (2S,4S)-4-hydroxy-2,3,4,5-tetrahydrodipicolinate + NADH + H(+). The catalysed reaction is (S)-2,3,4,5-tetrahydrodipicolinate + NADP(+) + H2O = (2S,4S)-4-hydroxy-2,3,4,5-tetrahydrodipicolinate + NADPH + H(+). It participates in amino-acid biosynthesis; L-lysine biosynthesis via DAP pathway; (S)-tetrahydrodipicolinate from L-aspartate: step 4/4. Functionally, catalyzes the conversion of 4-hydroxy-tetrahydrodipicolinate (HTPA) to tetrahydrodipicolinate. This chain is 4-hydroxy-tetrahydrodipicolinate reductase, found in Salmonella arizonae (strain ATCC BAA-731 / CDC346-86 / RSK2980).